Consider the following 179-residue polypeptide: MAKLHDKYKETVIAELSKKFGYTSVMQVPRIEKITLNMGVGEAVADKKIMENAVRDMTAIAGQKPVVTVARKSVAGFKIREGYPIGCKVTLRGERMWEFFERLLDIAIPRIRDFRGLSAKSFDGRGNYAMGVREQIIFPEIDYDKIDRVRGMDIVITTTAKNDEEGRALLDAFNFPFKK.

This sequence belongs to the universal ribosomal protein uL5 family. As to quaternary structure, part of the 50S ribosomal subunit; part of the 5S rRNA/L5/L18/L25 subcomplex. Contacts the 5S rRNA and the P site tRNA. Forms a bridge to the 30S subunit in the 70S ribosome.

Its function is as follows. This is one of the proteins that bind and probably mediate the attachment of the 5S RNA into the large ribosomal subunit, where it forms part of the central protuberance. In the 70S ribosome it contacts protein S13 of the 30S subunit (bridge B1b), connecting the 2 subunits; this bridge is implicated in subunit movement. Contacts the P site tRNA; the 5S rRNA and some of its associated proteins might help stabilize positioning of ribosome-bound tRNAs. This is Large ribosomal subunit protein uL5 from Shewanella amazonensis (strain ATCC BAA-1098 / SB2B).